Reading from the N-terminus, the 362-residue chain is 5'-tyrosyl-DNA phosphodiesterase (362 aa).

Positions 1–10 (MSNSDDEIQE) are enriched in acidic residues. Residues 1 to 43 (MSNSDDEIQEIEAKRQKMSQEDSEVEIEILDEPEQGKLKNSSM) are disordered. Positions 11–20 (IEAKRQKMSQ) are enriched in basic and acidic residues. The segment covering 21–33 (EDSEVEIEILDEP) has biased composition (acidic residues). Residues 126-130 (NIDGL) are interaction with 5' end of substrate DNA. The Mg(2+) site is built by Asp-128 and Glu-158. An interaction with 5' end of substrate DNA region spans residues 232 to 237 (HLESTR). Asp-271 acts as the Proton donor/acceptor in catalysis. An interaction with 5' end of substrate DNA region spans residues 273–275 (NLR).

It belongs to the CCR4/nocturin family. TTRAP/TDP2 subfamily. As to quaternary structure, interacts with mxl-1; the interaction promotes axon regeneration after injury. Interacts with ets-4; the interaction is required for the sumoylation of ets-4. The cofactor is Mg(2+). Requires Mn(2+) as cofactor.

It localises to the nucleus. It is found in the PML body. Functionally, DNA repair enzyme that can remove a variety of covalent adducts from DNA through hydrolysis of a 5'-phosphodiester bond, giving rise to DNA with a free 5' phosphate. Catalyzes the hydrolysis of dead-end complexes between DNA and the topoisomerase 2 (top2) active site tyrosine residue. Hydrolyzes 5'-phosphoglycolates on protruding 5' ends on DNA double-strand breaks (DSBs) due to DNA damage by radiation and free radicals. Inhibits axon regeneration after neuronal injury by promoting the sumoylation of ets-4, thereby inhibiting the phosphorylation of ets-4 required for probable interaction with cebp-1 and activation of svh-2 expression. The protein is 5'-tyrosyl-DNA phosphodiesterase of Caenorhabditis elegans.